The primary structure comprises 243 residues: Venom nerve growth factor 5 (243 aa).

The first 18 residues, 1-18 (MSMLCYTLIIAFLIGIWA), serve as a signal peptide directing secretion. The propeptide occupies 19–125 (APKSEDNVPL…TLNRNIRTKR (107 aa)). The segment covering 47-66 (GLKTSRNTDQRHPAPKKAED) has biased composition (basic and acidic residues). A disordered region spans residues 47-67 (GLKTSRNTDQRHPAPKKAEDQ). Cystine bridges form between cysteine 139–cysteine 204, cysteine 182–cysteine 232, and cysteine 192–cysteine 234. The N-linked (GlcNAc...) asparagine glycan is linked to asparagine 148.

It belongs to the NGF-beta family. Homodimer; non-covalently linked. In terms of tissue distribution, expressed by the venom gland.

Its subcellular location is the secreted. Nerve growth factor is important for the development and maintenance of the sympathetic and sensory nervous systems. It stimulates division and differentiation of sympathetic and embryonic sensory neurons as well as basal forebrain cholinergic neurons in the brain. Its relevance in the snake venom is not clear. However, it has been shown to inhibit metalloproteinase-dependent proteolysis of platelet glycoprotein Ib alpha, suggesting a metalloproteinase inhibition to prevent metalloprotease autodigestion and/or protection against prey proteases. Binds a lipid between the two protein chains in the homodimer. The lipid-bound form promotes histamine relase from mouse mast cells, contrary to the lipid-free form. This chain is Venom nerve growth factor 5, found in Tropidechis carinatus (Australian rough-scaled snake).